A 232-amino-acid chain; its full sequence is 2-C-methyl-D-erythritol 4-phosphate cytidylyltransferase (232 aa).

It belongs to the IspD/TarI cytidylyltransferase family. IspD subfamily.

It carries out the reaction 2-C-methyl-D-erythritol 4-phosphate + CTP + H(+) = 4-CDP-2-C-methyl-D-erythritol + diphosphate. Its pathway is isoprenoid biosynthesis; isopentenyl diphosphate biosynthesis via DXP pathway; isopentenyl diphosphate from 1-deoxy-D-xylulose 5-phosphate: step 2/6. Functionally, catalyzes the formation of 4-diphosphocytidyl-2-C-methyl-D-erythritol from CTP and 2-C-methyl-D-erythritol 4-phosphate (MEP). The sequence is that of 2-C-methyl-D-erythritol 4-phosphate cytidylyltransferase from Vibrio cholerae serotype O1 (strain ATCC 39315 / El Tor Inaba N16961).